A 420-amino-acid polypeptide reads, in one-letter code: Tyrosine--tRNA ligase (420 aa).

Y36 lines the L-tyrosine pocket. A 'HIGH' region motif is present at residues 41–50; the sequence is PTADSLHIGH. Residues Y170 and Q174 each contribute to the L-tyrosine site. Positions 231 to 235 match the 'KMSKS' region motif; the sequence is KFGKS. K234 contributes to the ATP binding site. Positions 353–420 constitute an S4 RNA-binding domain; it reads SNIIDVLIET…KKKYFMVNYK (68 aa).

It belongs to the class-I aminoacyl-tRNA synthetase family. TyrS type 1 subfamily. Homodimer.

The protein localises to the cytoplasm. The enzyme catalyses tRNA(Tyr) + L-tyrosine + ATP = L-tyrosyl-tRNA(Tyr) + AMP + diphosphate + H(+). Functionally, catalyzes the attachment of tyrosine to tRNA(Tyr) in a two-step reaction: tyrosine is first activated by ATP to form Tyr-AMP and then transferred to the acceptor end of tRNA(Tyr). This chain is Tyrosine--tRNA ligase, found in Staphylococcus haemolyticus (strain JCSC1435).